The primary structure comprises 264 residues: Signal peptidase I (264 aa).

Over 1–18 (MNRDNTKTNKTVKQEFAS) the chain is Cytoplasmic. The chain crosses the membrane as a helical span at residues 19-39 (FTFVICIALVIRILIMEPFTV). Residues 40 to 264 (PTGSMKATIL…IFKNLYNVDE (225 aa)) are Periplasmic-facing. Active-site residues include S43 and K106.

Belongs to the peptidase S26 family.

It localises to the cell inner membrane. The catalysed reaction is Cleavage of hydrophobic, N-terminal signal or leader sequences from secreted and periplasmic proteins.. In terms of biological role, complements E.coli mutants temperature-sensitive for LepB function. The chain is Signal peptidase I (lepB) from Rickettsia typhi (strain ATCC VR-144 / Wilmington).